The following is a 421-amino-acid chain: Hemagglutinin-esterase (421 aa).

The N-terminal stretch at 1–16 (MFLLPRFILVSCIIGS) is a signal peptide. The tract at residues 7 to 127 (FILVSCIIGS…SNDIWMQNKG (121 aa)) is esterase domain 1. The Virion surface segment spans residues 17–392 (LGFDNPPTNV…PICVYDPLPL (376 aa)). Residue serine 40 is the Nucleophile of the active site. Cysteine 44 and cysteine 65 form a disulfide bridge. N-linked (GlcNAc...) asparagine; by host glycosylation is found at asparagine 54, asparagine 89, asparagine 153, asparagine 236, and asparagine 301. 3 disulfide bridges follow: cysteine 113-cysteine 162, cysteine 197-cysteine 276, and cysteine 205-cysteine 249. The segment at 128 to 266 (LFYTQVYKNM…GNYLAISNEL (139 aa)) is receptor binding. Residues 267 to 379 (LLTVPTKAIC…RCPTAADINT (113 aa)) are esterase domain 2. Cysteine 307 and cysteine 312 are joined by a disulfide. Asparagine 316 carries an N-linked (GlcNAc...) asparagine; by host glycan. Catalysis depends on charge relay system residues aspartate 326 and histidine 329. Cysteine 347 and cysteine 371 are joined by a disulfide. An N-linked (GlcNAc...) asparagine; by host glycan is attached at asparagine 358. A helical membrane pass occupies residues 393-413 (ILLGILLGVAVIIIVVLLLYF). Topologically, residues 414–421 (MVENGTRL) are intravirion. A glycan (N-linked (GlcNAc...) asparagine; by host) is linked at asparagine 417.

The protein belongs to the influenza type C/coronaviruses hemagglutinin-esterase family. Homodimer; disulfide-linked. Forms a complex with the M protein in the pre-Golgi. Associates then with S-M complex to form a ternary complex S-M-HE. In terms of processing, N-glycosylated in the host RER.

The protein localises to the virion membrane. The protein resides in the host cell membrane. It carries out the reaction N-acetyl-9-O-acetylneuraminate + H2O = N-acetylneuraminate + acetate + H(+). It catalyses the reaction N-acetyl-4-O-acetylneuraminate + H2O = N-acetylneuraminate + acetate + H(+). In terms of biological role, structural protein that makes short spikes at the surface of the virus. Contains receptor binding and receptor-destroying activities. Mediates de-O-acetylation of N-acetyl-4-O-acetylneuraminic acid, which is probably the receptor determinant recognized by the virus on the surface of erythrocytes and susceptible cells. This receptor-destroying activity is important for virus release as it probably helps preventing self-aggregation and ensures the efficient spread of the progeny virus from cell to cell. May serve as a secondary viral attachment protein for initiating infection, the spike protein being the major one. May become a target for both the humoral and the cellular branches of the immune system. The chain is Hemagglutinin-esterase from Bos taurus (Bovine).